The sequence spans 197 residues: dCTP deaminase (197 aa).

Residues Arg-110–Arg-115, Asp-128, Val-136–Glu-138, Tyr-171, and Gln-182 contribute to the dCTP site. Catalysis depends on Glu-138, which acts as the Proton donor/acceptor.

Belongs to the dCTP deaminase family. As to quaternary structure, homotrimer.

It carries out the reaction dCTP + H2O + H(+) = dUTP + NH4(+). Its pathway is pyrimidine metabolism; dUMP biosynthesis; dUMP from dCTP (dUTP route): step 1/2. Its function is as follows. Catalyzes the deamination of dCTP to dUTP. The protein is dCTP deaminase of Alteromonas mediterranea (strain DSM 17117 / CIP 110805 / LMG 28347 / Deep ecotype).